A 788-amino-acid chain; its full sequence is MTTDYSSPAYLQKVDKYWRAANYLSVGQLYLKDNPLLQRPLKASDVKVHPIGHWGTIAGQNFIYAHLNRVINKYGLKMFYVEGPGHGGQVMVSNSYLDGTYTDIYPEITQDVEGMQKLFKQFSFPGGVASHAAPETPGSIHEGGELGYSISHGVGAILDNPDEIAAVVVGDGESETGPLATSWQSTKFINPINDGAVLPILNLNGFKISNPTIFGRTSDAKIKEYFESMNWEPIFVEGDDPEKVHPALAKAMDEAVEKIKAIQKHARENNDATLPVWPMIVFRAPKGWTGPKSWDGDKIEGSFRAHQIPIPVDQNDMEHADALVDWLESYQPKELFNEDGSLKDDIKEIIPTGDSRMAANPITNGGVDPKALNLPNFRDYAVDTSKEGANVKQDMIVWSDYLRDVIKKNPDNFRLFGPDETMSNRLYGVFETTNRQWMEDIHPDSDQYEAPAGRVLDAQLSEHQAEGWLEGYVLTGRHGLFASYEAFLRVVDSMLTQHFKWLRKANELDWRKKYPSLNIIAASTVFQQDHNGYTHQDPGALTHLAEKKPEYIREYLPADANTLLAVGDVIFRSQEKINYVVTSKHPRQQWFSIEEAKQLVDNGLGIIDWASTDQGSEPDIVFAAAGTEPTLETLAAIQLLHDSFPEMKIRFVNVVDILKLRSPEKDPRGLSDAEFDHYFTKDKPVVFAFHGYEDLVRDIFFDRHNHNLYVHGYRENGDITTPFDVRVMNQMDRFDLAKSAIAAQPAMENTGAAFVQSMDNMLAKHNAYIRDAGTDLPEVNDWQWKGLK.

This sequence belongs to the XFP family. The cofactor is thiamine diphosphate.

This chain is Probable phosphoketolase 1, found in Lactiplantibacillus plantarum (strain ATCC BAA-793 / NCIMB 8826 / WCFS1) (Lactobacillus plantarum).